The primary structure comprises 483 residues: MSLFDHSLTKLHELLAAKEINVSDLVDVSYKRIADVDSKVKAFLTLDEERARDLAKKLDEVDASEKGVLFGMPIGIKDNIVTKGLRTTCSSKILENFDPIYDATVVTKLRGAETVTIGKINMDEFAMGSSNENSAFQVTTNPWNTDYVPGGSSGGSAAAVAAGEVPFALGSDTGGSIRQPAAYCGVVGLKPTYGRVSRYGLVAFASSLDQIGPITRTVEDNAYLLEAIAGHCPADSTSADLPVPPYRESLTGEIKGLRIGVPSEYIGDGVSEEMRKAVFDALNVLEKEGAVWEEVSLPYSKYALAAYYVIASSEASANLARFDGVRYGYRTDNADNLLDMYKNTRAEGFGDEVKRRIMLGTFALSSGYYDAYYKKAQQVRTLIKKDFDDVFTNYDVIIGPTTPTPAFKIGAKTDDPLTMYANDILTIPVNLAGVPALSLPCGFKDGLPLGLQIIGKHFDEATIYRVADVYEKATNFSKEKPSL.

Active-site charge relay system residues include K77 and S152. The Acyl-ester intermediate role is filled by S176.

The protein belongs to the amidase family. GatA subfamily. In terms of assembly, heterotrimer of A, B and C subunits.

It carries out the reaction L-glutamyl-tRNA(Gln) + L-glutamine + ATP + H2O = L-glutaminyl-tRNA(Gln) + L-glutamate + ADP + phosphate + H(+). Its function is as follows. Allows the formation of correctly charged Gln-tRNA(Gln) through the transamidation of misacylated Glu-tRNA(Gln) in organisms which lack glutaminyl-tRNA synthetase. The reaction takes place in the presence of glutamine and ATP through an activated gamma-phospho-Glu-tRNA(Gln). The sequence is that of Glutamyl-tRNA(Gln) amidotransferase subunit A from Shouchella clausii (strain KSM-K16) (Alkalihalobacillus clausii).